Here is a 364-residue protein sequence, read N- to C-terminus: Histidinol-phosphate aminotransferase 1 (364 aa).

Lysine 211 is subject to N6-(pyridoxal phosphate)lysine.

The protein belongs to the class-II pyridoxal-phosphate-dependent aminotransferase family. Histidinol-phosphate aminotransferase subfamily. In terms of assembly, homodimer. Pyridoxal 5'-phosphate is required as a cofactor.

It catalyses the reaction L-histidinol phosphate + 2-oxoglutarate = 3-(imidazol-4-yl)-2-oxopropyl phosphate + L-glutamate. It functions in the pathway amino-acid biosynthesis; L-histidine biosynthesis; L-histidine from 5-phospho-alpha-D-ribose 1-diphosphate: step 7/9. This is Histidinol-phosphate aminotransferase 1 from Legionella pneumophila (strain Paris).